The sequence spans 269 residues: Expansin-B11 (269 aa).

The N-terminal stretch at 1-30 is a signal peptide; that stretch reads MTVVSIMWSLVQVQVLVAVALAFLVGGAWC. Asparagine 40 carries an N-linked (GlcNAc...) asparagine glycan. The 107-residue stretch at 69-175 folds into the Expansin-like EG45 domain; it reads GGGCGYKDVN…RRVKCKYGSK (107 aa). 3 cysteine pairs are disulfide-bonded: cysteine 72–cysteine 100, cysteine 103–cysteine 170, and cysteine 108–cysteine 114. The region spanning 187 to 268 is the Expansin-like CBD domain; it reads NYLALLVKYV…GWKPNTAYTA (82 aa).

Belongs to the expansin family. Expansin B subfamily. In terms of tissue distribution, expressed in pollen.

It is found in the secreted. Its subcellular location is the cell wall. The protein resides in the membrane. In terms of biological role, may aid fertilization by loosening the cell wall of the stigma and style, thereby facilitating penetration of the pollen tube. Acts selectively on grass cell walls, which are relatively poor in pectins and xyloglucans and rich in glucuronoarabinoxylans and (1-3),(1-4)-beta-D-glucans, when compared with cell walls of other angiosperms, including other monocots. The protein is Expansin-B11 (EXPB11) of Zea mays (Maize).